The following is a 128-amino-acid chain: Ribonuclease P protein component (128 aa).

This sequence belongs to the RnpA family. In terms of assembly, consists of a catalytic RNA component (M1 or rnpB) and a protein subunit.

The enzyme catalyses Endonucleolytic cleavage of RNA, removing 5'-extranucleotides from tRNA precursor.. In terms of biological role, RNaseP catalyzes the removal of the 5'-leader sequence from pre-tRNA to produce the mature 5'-terminus. It can also cleave other RNA substrates such as 4.5S RNA. The protein component plays an auxiliary but essential role in vivo by binding to the 5'-leader sequence and broadening the substrate specificity of the ribozyme. The polypeptide is Ribonuclease P protein component (Prochlorococcus marinus (strain MIT 9303)).